A 461-amino-acid polypeptide reads, in one-letter code: Threonine/serine transporter ThrP (461 aa).

Helical transmembrane passes span 17–37, 40–60, 97–117, 123–143, 156–176, 201–221, 244–264, 278–298, 333–353, 360–380, 401–421, and 430–450; these read IELI…AAST, WAGP…FFIM, WFMW…YVQF, AQWI…LAAV, IKVT…FFGF, GFLT…LIGI, ILIF…WNEI, IGIT…ALSG, VAGV…NYII, FVYV…VILI, IMFP…LIGM, and SLFV…VFGL.

It belongs to the amino acid-polyamine-organocation (APC) superfamily.

The protein localises to the cell inner membrane. The enzyme catalyses L-threonine(in) + H(+)(in) = L-threonine(out) + H(+)(out). It carries out the reaction L-serine(in) + H(+)(in) = L-serine(out) + H(+)(out). Functionally, permease that mediates the proton-dependent threonine and serine uptake. This chain is Threonine/serine transporter ThrP, found in Salmonella typhi.